Reading from the N-terminus, the 121-residue chain is Large ribosomal subunit protein bL12 (121 aa).

It belongs to the bacterial ribosomal protein bL12 family. In terms of assembly, homodimer. Part of the ribosomal stalk of the 50S ribosomal subunit. Forms a multimeric L10(L12)X complex, where L10 forms an elongated spine to which 2 to 4 L12 dimers bind in a sequential fashion. Binds GTP-bound translation factors.

In terms of biological role, forms part of the ribosomal stalk which helps the ribosome interact with GTP-bound translation factors. Is thus essential for accurate translation. The sequence is that of Large ribosomal subunit protein bL12 from Lactobacillus delbrueckii subsp. bulgaricus (strain ATCC BAA-365 / Lb-18).